Reading from the N-terminus, the 229-residue chain is Uracil-DNA glycosylase (229 aa).

Residue aspartate 64 is the Proton acceptor of the active site.

It belongs to the uracil-DNA glycosylase (UDG) superfamily. UNG family.

Its subcellular location is the cytoplasm. It carries out the reaction Hydrolyzes single-stranded DNA or mismatched double-stranded DNA and polynucleotides, releasing free uracil.. In terms of biological role, excises uracil residues from the DNA which can arise as a result of misincorporation of dUMP residues by DNA polymerase or due to deamination of cytosine. The polypeptide is Uracil-DNA glycosylase (Salmonella choleraesuis (strain SC-B67)).